Consider the following 98-residue polypeptide: MSANKGWWVPPEGEDNLSKKFLRKTRESPLVPIGVAGCLVIAAYRIYRLKARGSTKLSIHLIHTRVAAQACAVGAIMLGAMYTMYRDYIKRVSEDAEK.

Over 1-28 (MSANKGWWVPPEGEDNLSKKFLRKTRES) the chain is Cytoplasmic. One can recognise an HIG1 domain in the interval 1 to 94 (MSANKGWWVP…YRDYIKRVSE (94 aa)). Residues 29-46 (PLVPIGVAGCLVIAAYRI) traverse the membrane as a helical segment. The Extracellular portion of the chain corresponds to 47 to 60 (YRLKARGSTKLSIH). The helical transmembrane segment at 61-83 (LIHTRVAAQACAVGAIMLGAMYT) threads the bilayer. Topologically, residues 84 to 98 (MYRDYIKRVSEDAEK) are cytoplasmic.

The protein resides in the membrane. The polypeptide is HIG1 domain family member 1B (Higd1b) (Mus musculus (Mouse)).